We begin with the raw amino-acid sequence, 745 residues long: Gamma-tubulin complex component 4 (745 aa).

This sequence belongs to the TUBGCP family. As to quaternary structure, gamma-tubulin complex is composed of gamma-tubulin and GCP proteins.

It is found in the cytoplasm. It localises to the cytoskeleton. Its subcellular location is the microtubule organizing center. The protein resides in the spindle. Gamma-tubulin complex is necessary for microtubule nucleation at the microtubule organizing centers (MTOCs). Its function is as follows. Gamma-tubulin complex is essential for the control of microtubular network remodeling in the course of initiation and development of giant-feeding cells, and for the successful reproduction of nematodes (e.g. Meloidogyne spp.) in their plant hosts. The polypeptide is Gamma-tubulin complex component 4 (GCP4) (Arabidopsis thaliana (Mouse-ear cress)).